We begin with the raw amino-acid sequence, 133 residues long: Small ribosomal subunit protein uS8 (133 aa).

This sequence belongs to the universal ribosomal protein uS8 family. Part of the 30S ribosomal subunit. Contacts proteins S5 and S12.

Functionally, one of the primary rRNA binding proteins, it binds directly to 16S rRNA central domain where it helps coordinate assembly of the platform of the 30S subunit. In Deinococcus geothermalis (strain DSM 11300 / CIP 105573 / AG-3a), this protein is Small ribosomal subunit protein uS8.